The following is a 554-amino-acid chain: Glutamine--tRNA ligase (554 aa).

A 'HIGH' region motif is present at residues 34-44 (PEPNGYLHIGH). ATP-binding positions include 35–37 (EPN) and 41–47 (HIGHAKS). L-glutamine is bound by residues Asp-67 and Tyr-212. ATP is bound by residues Thr-231, 261–262 (RL), and 269–271 (MSK). The 'KMSKS' region motif lies at 268–272 (VMSKR). Positions 317 to 324 (TKQDNTIE) are interaction with tRNA.

It belongs to the class-I aminoacyl-tRNA synthetase family. In terms of assembly, monomer.

Its subcellular location is the cytoplasm. It carries out the reaction tRNA(Gln) + L-glutamine + ATP = L-glutaminyl-tRNA(Gln) + AMP + diphosphate. This is Glutamine--tRNA ligase from Escherichia coli O127:H6 (strain E2348/69 / EPEC).